Here is a 197-residue protein sequence, read N- to C-terminus: Imidazoleglycerol-phosphate dehydratase (197 aa).

It belongs to the imidazoleglycerol-phosphate dehydratase family.

It is found in the cytoplasm. The catalysed reaction is D-erythro-1-(imidazol-4-yl)glycerol 3-phosphate = 3-(imidazol-4-yl)-2-oxopropyl phosphate + H2O. It participates in amino-acid biosynthesis; L-histidine biosynthesis; L-histidine from 5-phospho-alpha-D-ribose 1-diphosphate: step 6/9. This chain is Imidazoleglycerol-phosphate dehydratase, found in Nitrosomonas europaea (strain ATCC 19718 / CIP 103999 / KCTC 2705 / NBRC 14298).